Reading from the N-terminus, the 249-residue chain is Putative adhesin RC1281 (249 aa).

The signal sequence occupies residues 1-22; sequence MKKLLLIAAASTALLTSGLSFA.

In terms of biological role, adheres to biotinylated epithelial (Vero cell) proteins. The sequence is that of Putative adhesin RC1281 from Rickettsia conorii (strain ATCC VR-613 / Malish 7).